Consider the following 383-residue polypeptide: uncharacterized protein (383 aa).

The next 10 membrane-spanning stretches (helical) occupy residues 25–45, 53–73, 103–123, 139–159, 166–186, 200–220, 238–258, 272–292, 309–329, and 332–352; these read LWVA…PAVA, IYNV…PIMV, FTMV…LLTA, IAGC…MWGY, GLTL…YAPL, WQTI…AGIY, FLHY…ILLF, IFLI…ITYV, LIGA…LFGL, and GAAL…LMLV.

The protein belongs to the arsenical resistance-3 (ACR3) (TC 2.A.59) family.

The protein resides in the cell membrane. This is an uncharacterized protein from Synechocystis sp. (strain ATCC 27184 / PCC 6803 / Kazusa).